We begin with the raw amino-acid sequence, 1118 residues long: Cytospin-A (1118 aa).

4 disordered regions span residues 1–63 (MKKA…AGMA), 75–176 (KKST…NQIS), 294–324 (SLSP…GSVE), and 359–391 (SSDD…NASE). A compositionally biased stretch (low complexity) spans 80–90 (SSAAPSAPAPA). Over residues 93–117 (ISENKSKISTGTSSSAKRSTSAGNK) the composition is skewed to polar residues. The span at 120 to 131 (SSTRERLRERTR) shows a compositional bias: basic and acidic residues. The segment covering 133–145 (NQSKKLPSVSQGA) has biased composition (polar residues). The segment covering 158–171 (TAAEGDIRMSKSKS) has biased composition (basic and acidic residues). Positions 168 to 281 (KSKSDNQISD…LNALGFSLEQ (114 aa)) form a coiled coil. Residues 294–304 (SLSPEITPGNQ) are compositionally biased toward polar residues. Residues 359-373 (SSDDALDAPSSSESE) show a composition bias toward low complexity. A phosphoserine mark is found at S385, S386, and S390. Coiled-coil stretches lie at residues 395–450 (ACLT…MESL) and 488–808 (RYME…RGRV). Phosphoserine occurs at positions 869, 882, and 888. The segment at 921-999 (TSSTSRPASL…STRSRIREER (79 aa)) is disordered. Residues 947–957 (RSSEEMKRDIS) are compositionally biased toward basic and acidic residues. The span at 972-992 (TTSPQLSLSSSPTASVTPSTR) shows a compositional bias: low complexity. One can recognise a Calponin-homology (CH) domain in the interval 1012 to 1117 (GSKRNALLKW…YVTAIYKYFE (106 aa)).

The protein belongs to the cytospin-A family. As to quaternary structure, may interact with both microtubules and actin cytoskeleton.

It localises to the cytoplasm. The protein localises to the cytoskeleton. Its subcellular location is the spindle. It is found in the cell junction. The protein resides in the gap junction. Functionally, involved in cytokinesis and spindle organization. May play a role in actin cytoskeleton organization and microtubule stabilization and hence required for proper cell adhesion and migration. The protein is Cytospin-A (Specc1l) of Mus musculus (Mouse).